The primary structure comprises 71 residues: Small, acid-soluble spore protein 2 (71 aa).

This sequence belongs to the alpha/beta-type SASP family.

SASP are bound to spore DNA. They are double-stranded DNA-binding proteins that cause DNA to change to an a-like conformation. They protect the DNA backbone from chemical and enzymatic cleavage and are thus involved in dormant spore's high resistance to UV light. The chain is Small, acid-soluble spore protein 2 from Bacillus subtilis.